Consider the following 147-residue polypeptide: Large ribosomal subunit protein uL15 (147 aa).

A disordered region spans residues 1-45 (MRLEDLRPTPGAMKKRKRVGRGPGSGHGKTSGRGHKGQKARGSGK). A compositionally biased stretch (basic residues) spans 30 to 44 (TSGRGHKGQKARGSG).

This sequence belongs to the universal ribosomal protein uL15 family. In terms of assembly, part of the 50S ribosomal subunit.

Its function is as follows. Binds to the 23S rRNA. The sequence is that of Large ribosomal subunit protein uL15 from Thermotoga sp. (strain RQ2).